Here is a 317-residue protein sequence, read N- to C-terminus: Olfactory receptor 10AD1 (317 aa).

Topologically, residues 1–25 are extracellular; that stretch reads MLRNGSIVTEFILVGFQQSSTSTRA. An N-linked (GlcNAc...) asparagine glycan is attached at Asn4. The helical transmembrane segment at 26 to 46 threads the bilayer; sequence LLFALFLALYSLTMAMNGLII. Topologically, residues 47-55 are cytoplasmic; that stretch reads FITSWTDPK. Residues 56 to 76 traverse the membrane as a helical segment; sequence LNSPMYFFLGHLSLLDVCFIT. The Extracellular segment spans residues 77–100; sequence TTIPQMLIHLVVRDHIVSFVCCMT. Residues Cys98 and Cys190 are joined by a disulfide bond. A helical membrane pass occupies residues 101–121; it reads QMYFVFCVGVAECILLAFMAY. The Cytoplasmic portion of the chain corresponds to 122–140; sequence DRYVAICYPLNYVPIISQK. A helical membrane pass occupies residues 141-161; sequence VCVRLVGTAWFFGLINGIFLE. Residues 162–198 are Extracellular-facing; it reads YISFREPFRRDNHIESFFCEAPIVIGLSCGDPQFSLW. The chain crosses the membrane as a helical span at residues 199–218; that stretch reads AIFADAIVVILSPMVLTVTS. Topologically, residues 219–238 are cytoplasmic; that stretch reads YVHILATILSKASSSGRGKT. A helical transmembrane segment spans residues 239–259; sequence FSTCASHLTVVIFLYTSAMFS. Residues 260–272 lie on the Extracellular side of the membrane; that stretch reads YMNPHSTHGPDKD. The chain crosses the membrane as a helical span at residues 273–293; the sequence is KPFSLLYTIITPMCNPIIYSF. The Cytoplasmic portion of the chain corresponds to 294–317; sequence RNKEIKEAMVRALGRTRLAQPQSV.

It belongs to the G-protein coupled receptor 1 family.

It localises to the cell membrane. In terms of biological role, odorant receptor. This Homo sapiens (Human) protein is Olfactory receptor 10AD1 (OR10AD1).